Reading from the N-terminus, the 88-residue chain is Large ribosomal subunit protein bL27 (88 aa).

It belongs to the bacterial ribosomal protein bL27 family.

In Mycolicibacterium vanbaalenii (strain DSM 7251 / JCM 13017 / BCRC 16820 / KCTC 9966 / NRRL B-24157 / PYR-1) (Mycobacterium vanbaalenii), this protein is Large ribosomal subunit protein bL27.